The primary structure comprises 81 residues: Putative membrane protein insertion efficiency factor (81 aa).

The protein belongs to the UPF0161 family.

It is found in the cell inner membrane. Functionally, could be involved in insertion of integral membrane proteins into the membrane. This Thermotoga maritima (strain ATCC 43589 / DSM 3109 / JCM 10099 / NBRC 100826 / MSB8) protein is Putative membrane protein insertion efficiency factor.